The chain runs to 207 residues: Ubiquitin-conjugating enzyme E2 E3 (207 aa).

Positions 1–10 (MSSDRQRSDD) are enriched in basic and acidic residues. The interval 1-63 (MSSDRQRSDD…KTTAKLSTSA (63 aa)) is disordered. S2 is subject to N-acetylserine. S8 bears the Phosphoserine mark. The span at 50–63 (KLSSKTTAKLSTSA) shows a compositional bias: low complexity. Residues 61 to 207 (TSAKRIQKEL…ARQWTKRYAT (147 aa)) form the UBC core domain. C145 (glycyl thioester intermediate) is an active-site residue.

It belongs to the ubiquitin-conjugating enzyme family. In terms of assembly, the ubiquitin-loaded form interacts specifically with importin-11 (IPO11), leading to its import into the nucleus. Interacts with NEDD4L.

It is found in the nucleus. The protein localises to the cytoplasm. The catalysed reaction is S-ubiquitinyl-[E1 ubiquitin-activating enzyme]-L-cysteine + [E2 ubiquitin-conjugating enzyme]-L-cysteine = [E1 ubiquitin-activating enzyme]-L-cysteine + S-ubiquitinyl-[E2 ubiquitin-conjugating enzyme]-L-cysteine.. The protein operates within protein modification; protein ubiquitination. Functionally, accepts ubiquitin from the E1 complex and catalyzes its covalent attachment to other proteins. In vitro catalyzes 'Lys-11'- and 'Lys-48'-, as well as 'Lys-63'-linked polyubiquitination. Participates in the regulation of transepithelial sodium transport in renal cells. This is Ubiquitin-conjugating enzyme E2 E3 (UBE2E3) from Bos taurus (Bovine).